The following is a 512-amino-acid chain: NADH-quinone oxidoreductase subunit N 2 (512 aa).

14 consecutive transmembrane segments (helical) span residues 23 to 43 (AFVP…IDLF), 50 to 70 (TIIP…VYLQ), 88 to 108 (FAIF…LISI), 120 to 140 (SLGE…LMAS), 144 to 164 (LLMM…LVGY), 179 to 199 (VIYG…IYGL), 220 to 240 (ITLM…AGVV), 254 to 274 (PTPI…AMLI), 295 to 315 (WVTL…VVAL), 323 to 343 (LLAY…IVAD), 351 to 371 (LFYL…IILI), 394 to 414 (AASL…VGFI), 429 to 449 (VFVW…YFYF), and 477 to 497 (LVAF…PLSV).

It belongs to the complex I subunit 2 family. NDH-1 is composed of 14 different subunits. Subunits NuoA, H, J, K, L, M, N constitute the membrane sector of the complex.

The protein localises to the cell inner membrane. The catalysed reaction is a quinone + NADH + 5 H(+)(in) = a quinol + NAD(+) + 4 H(+)(out). Its function is as follows. NDH-1 shuttles electrons from NADH, via FMN and iron-sulfur (Fe-S) centers, to quinones in the respiratory chain. The immediate electron acceptor for the enzyme in this species is believed to be a menaquinone. Couples the redox reaction to proton translocation (for every two electrons transferred, four hydrogen ions are translocated across the cytoplasmic membrane), and thus conserves the redox energy in a proton gradient. The polypeptide is NADH-quinone oxidoreductase subunit N 2 (Chloroherpeton thalassium (strain ATCC 35110 / GB-78)).